The chain runs to 260 residues: Probable carbohydrate esterase At4g34215 (260 aa).

The tract at residues 1–22 is disordered; sequence MEGGSITPGEDKPEIQSPIPPN. Active-site residues include Ser-31, Asp-235, and His-238.

The protein belongs to the carbohydrate esterase 6 family.

This is Probable carbohydrate esterase At4g34215 from Arabidopsis thaliana (Mouse-ear cress).